Reading from the N-terminus, the 488-residue chain is Inosine-5'-monophosphate dehydrogenase (488 aa).

CBS domains follow at residues 95–153 (VITN…SMKI) and 157–214 (MTKE…PNSS). NAD(+) is bound by residues Asp-251 and 301-303 (GIG). Residues Gly-303 and Gly-305 each coordinate K(+). Ser-306 lines the IMP pocket. Cys-308 contributes to the K(+) binding site. Cys-308 functions as the Thioimidate intermediate in the catalytic mechanism. IMP is bound by residues 341 to 343 (DGG), 364 to 365 (GS), and 388 to 392 (YRGMG). The active-site Proton acceptor is Arg-404. Glu-416 provides a ligand contact to IMP. 3 residues coordinate K(+): Glu-470, Ser-471, and His-472.

The protein belongs to the IMPDH/GMPR family. In terms of assembly, homotetramer. K(+) serves as cofactor.

It catalyses the reaction IMP + NAD(+) + H2O = XMP + NADH + H(+). It functions in the pathway purine metabolism; XMP biosynthesis via de novo pathway; XMP from IMP: step 1/1. Its activity is regulated as follows. Mycophenolic acid (MPA) is a non-competitive inhibitor that prevents formation of the closed enzyme conformation by binding to the same site as the amobile flap. In contrast, mizoribine monophosphate (MZP) is a competitive inhibitor that induces the closed conformation. MPA is a potent inhibitor of mammalian IMPDHs but a poor inhibitor of the bacterial enzymes. MZP is a more potent inhibitor of bacterial IMPDH. Catalyzes the conversion of inosine 5'-phosphate (IMP) to xanthosine 5'-phosphate (XMP), the first committed and rate-limiting step in the de novo synthesis of guanine nucleotides, and therefore plays an important role in the regulation of cell growth. The protein is Inosine-5'-monophosphate dehydrogenase of Bacillus subtilis (strain 168).